Here is a 549-residue protein sequence, read N- to C-terminus: MSESFAQLFEESLKVLETRQGSIVSGTVVAIQKGFVLVDAGLKSESAIPVAEFLNAQGELEIQVGDTVNVALDAVEDGFGETKLSREKAVRHESWIELEKAYEEKATVIGLIXGKVKGGFTVELNGVRAFLPGSLVDTRPAREADHLLGKELEFKVIKLDQKRNNVVVSRRAVIESENSQEREQVLENLVEGSEVKGVVKNLTEYGAFVDLGGVDGLLHITDMAWKRVKHPSEIVNVGDEVTVKVLKFDKDRTRVSLGLKQLGQDPWAAIAENHPVNSKLTGKVTNLTDYGCFVEILDGVEGLVHVSEMDWTNKNIHPSKVVSLGDTVEVMVLEIDEERRRISLGLKQCKANPWTQFADTHNKGDKVTGKIKSITDFGIFIGLEGGIDGLVHLSDISWSISGEEAVRQYKKGDEVSAVVLAVDAVKERISLGIKQLEEDPFNNFVAINKKGAVVSATVVEADAKGAKVELAGGVEGYIRSADLTSEVAVGDVVEAKYTGVDRKSRIVHLSVKAKDQAEEAAAVASVNNKQEDIVIPNAMAEAFKAAKGE.

S1 motif domains are found at residues G21–E87, K105–R171, G192–K260, N277–K347, G364–K434, and G451–K512.

It belongs to the bacterial ribosomal protein bS1 family.

Functionally, binds mRNA; thus facilitating recognition of the initiation point. It is needed to translate mRNA with a short Shine-Dalgarno (SD) purine-rich sequence. In Haemophilus influenzae (strain ATCC 51907 / DSM 11121 / KW20 / Rd), this protein is Small ribosomal subunit protein bS1 (rpsA).